The primary structure comprises 983 residues: Anion exchange protein 4 (983 aa).

Positions methionine 1–leucine 48 are disordered. Asparagine 183 carries an N-linked (GlcNAc...) asparagine glycan. 2 disordered regions span residues threonine 186 to glutamate 205 and arginine 332 to alanine 357. Transmembrane regions (helical) follow at residues alanine 415–glycine 435, glycine 443–glycine 463, valine 500–valine 520, and glycine 530–leucine 550. The interval alanine 415 to asparagine 983 is membrane (anion exchange). Residues asparagine 576 and asparagine 600 are each glycosylated (N-linked (GlcNAc...) asparagine). A run of 7 helical transmembrane segments spans residues valine 624 to alanine 644, phenylalanine 665 to threonine 685, proline 712 to methionine 732, leucine 758 to serine 778, glycine 815 to isoleucine 835, methionine 837 to phenylalanine 857, and leucine 899 to valine 919. Basic and acidic residues predominate over residues arginine 946–histidine 957. Residues arginine 946–asparagine 983 form a disordered region. Asparagine 979 carries an N-linked (GlcNAc...) asparagine glycan.

This sequence belongs to the anion exchanger (TC 2.A.31) family. In terms of tissue distribution, kidney specific.

Its subcellular location is the basolateral cell membrane. The catalysed reaction is 2 hydrogencarbonate(out) + chloride(in) + Na(+)(out) = 2 hydrogencarbonate(in) + chloride(out) + Na(+)(in). It carries out the reaction K(+)(in) + 2 hydrogencarbonate(in) + chloride(out) = K(+)(out) + 2 hydrogencarbonate(out) + chloride(in). The enzyme catalyses Li(+)(in) + 2 hydrogencarbonate(in) + chloride(out) = Li(+)(out) + 2 hydrogencarbonate(out) + chloride(in). It catalyses the reaction Rb(+)(in) + 2 hydrogencarbonate(in) + chloride(out) = Rb(+)(out) + 2 hydrogencarbonate(out) + chloride(in). The catalysed reaction is Cs(+)(in) + 2 hydrogencarbonate(in) + chloride(out) = Cs(+)(out) + 2 hydrogencarbonate(out) + chloride(in). Its function is as follows. Electroneutral Cl(-)/HCO3(-) antiporter that favors chloride ion entry and efflux of hydrogencarbonate and sodium ion across the basolateral membrane and may participate in salivary secretion. Also mediates Cl(-)/HCO3(-) exchange activity in the presence of K(+) as well as Cs(+), Li(+), and Rb(+). Does not contribute to Cl(-)/HCO3(-) exchanger in the apical membrane of the upper villous epithelium. The sequence is that of Anion exchange protein 4 from Homo sapiens (Human).